A 274-amino-acid chain; its full sequence is MKKTAIALLAWFVSSASLAATPWQKITHPVPGAAQSIASFANGCIIGADTLPVQSDNYQVMRTDQRRYFGHPDLVMFIQRLSHQAQQRGLGTVLIGDMGMPAGGRFNGGHASHQTGLDVDIFLQLPKTRWSQAQLLRPQALDLVSRDGKHVVPSRWSSDIASLIKLAAQDNDVTRIFVNPAIKQQLCLDAGSDRDWLRKVRPWFQHRAHMHVRLRCPADSLECEDQPLPPPGDGCGAELQSWFEPPKPGTTKPEKKTPPPLPPSCQALLDEHVL.

Residues 1 to 19 (MKKTAIALLAWFVSSASLA) form the signal peptide. 3 cysteine pairs are disulfide-bonded: Cys-44–Cys-265, Cys-187–Cys-235, and Cys-216–Cys-223. Residues His-110, His-113, Asp-120, Asp-147, His-150, and His-211 each coordinate Zn(2+). Residues 225-274 (DQPLPPPGDGCGAELQSWFEPPKPGTTKPEKKTPPPLPPSCQALLDEHVL) are disordered.

This sequence belongs to the peptidase M74 family. Dimer. Zn(2+) is required as a cofactor.

The protein localises to the periplasm. Its function is as follows. Murein endopeptidase that cleaves the D-alanyl-meso-2,6-diamino-pimelyl amide bond that connects peptidoglycan strands. Likely plays a role in the removal of murein from the sacculus. This is Penicillin-insensitive murein endopeptidase from Salmonella choleraesuis (strain SC-B67).